The sequence spans 207 residues: Superoxide dismutase [Fe] (207 aa).

Fe cation-binding residues include His-28, His-76, Asp-160, and His-164.

The protein belongs to the iron/manganese superoxide dismutase family. As to quaternary structure, homotetramer. Requires Fe cation as cofactor.

It localises to the secreted. The enzyme catalyses 2 superoxide + 2 H(+) = H2O2 + O2. Destroys superoxide anion radicals which are normally produced within the cells and which are toxic to biological systems. The sequence is that of Superoxide dismutase [Fe] (sodB) from Mycobacterium tuberculosis (strain CDC 1551 / Oshkosh).